Consider the following 98-residue polypeptide: UPF0358 protein LCA_1078 (98 aa).

This sequence belongs to the UPF0358 family.

This chain is UPF0358 protein LCA_1078, found in Latilactobacillus sakei subsp. sakei (strain 23K) (Lactobacillus sakei subsp. sakei).